Reading from the N-terminus, the 20-residue chain is Venom prothrombin activator notanarin-D (20 aa).

A Gla domain is found at Ser-1–Pro-10. 4-carboxyglutamate is present on residues Glu-6 and Glu-7. The Peptidase S1 domain occupies Ile-11 to Gly-20.

The protein belongs to the peptidase S1 family. Snake venom subfamily. Heterodimer of a light chain and a heavy chain; disulfide-linked. Gamma-carboxyglutamate residues are formed by vitamin K dependent carboxylation. These residues are essential for the binding of calcium. In terms of tissue distribution, expressed by the venom gland.

Its subcellular location is the secreted. It catalyses the reaction Selective cleavage of Arg-|-Thr and then Arg-|-Ile bonds in prothrombin to form thrombin.. Functionally, snake prothrombin activator that attacks the hemostatic system of prey. This protein is functionally similar to blood coagulation factor Xa. This chain is Venom prothrombin activator notanarin-D, found in Notechis scutatus niger (Peninsula tiger snake).